Reading from the N-terminus, the 139-residue chain is Translation initiation factor 2 subunit beta (139 aa).

Belongs to the eIF-2-beta/eIF-5 family. In terms of assembly, heterotrimer composed of an alpha, a beta and a gamma chain.

EIF-2 functions in the early steps of protein synthesis by forming a ternary complex with GTP and initiator tRNA. This chain is Translation initiation factor 2 subunit beta, found in Saccharolobus islandicus (strain Y.N.15.51 / Yellowstone #2) (Sulfolobus islandicus).